A 404-amino-acid polypeptide reads, in one-letter code: S-adenosylmethionine synthase (404 aa).

His17 is a binding site for ATP. Asp19 lines the Mg(2+) pocket. Position 45 (Glu45) interacts with K(+). Residues Glu58 and Gln101 each coordinate L-methionine. The tract at residues 101 to 111 is flexible loop; sequence QSPDINRGVDR. Residues 172–174, 246–247, Asp255, 261–262, Ala278, and Lys282 each bind ATP; these read DAK, RF, and RK. Asp255 provides a ligand contact to L-methionine. Lys286 is a binding site for L-methionine.

It belongs to the AdoMet synthase family. In terms of assembly, homotetramer; dimer of dimers. It depends on Mg(2+) as a cofactor. K(+) serves as cofactor.

The protein resides in the cytoplasm. It catalyses the reaction L-methionine + ATP + H2O = S-adenosyl-L-methionine + phosphate + diphosphate. The protein operates within amino-acid biosynthesis; S-adenosyl-L-methionine biosynthesis; S-adenosyl-L-methionine from L-methionine: step 1/1. Its function is as follows. Catalyzes the formation of S-adenosylmethionine (AdoMet) from methionine and ATP. The overall synthetic reaction is composed of two sequential steps, AdoMet formation and the subsequent tripolyphosphate hydrolysis which occurs prior to release of AdoMet from the enzyme. The chain is S-adenosylmethionine synthase from Chlorobaculum tepidum (strain ATCC 49652 / DSM 12025 / NBRC 103806 / TLS) (Chlorobium tepidum).